The sequence spans 321 residues: Fimbria adhesin protein (321 aa).

A signal peptide spans 1–18; the sequence is MKKLTLFIGLMALGTTSA.

This sequence belongs to the fimbrial protein family.

The protein localises to the fimbrium. The chain is Fimbria adhesin protein (mrkD) from Klebsiella pneumoniae.